Here is a 588-residue protein sequence, read N- to C-terminus: Proline--tRNA ligase (588 aa).

It belongs to the class-II aminoacyl-tRNA synthetase family. ProS type 1 subfamily. As to quaternary structure, homodimer.

It localises to the cytoplasm. The catalysed reaction is tRNA(Pro) + L-proline + ATP = L-prolyl-tRNA(Pro) + AMP + diphosphate. In terms of biological role, catalyzes the attachment of proline to tRNA(Pro) in a two-step reaction: proline is first activated by ATP to form Pro-AMP and then transferred to the acceptor end of tRNA(Pro). As ProRS can inadvertently accommodate and process non-cognate amino acids such as alanine and cysteine, to avoid such errors it has two additional distinct editing activities against alanine. One activity is designated as 'pretransfer' editing and involves the tRNA(Pro)-independent hydrolysis of activated Ala-AMP. The other activity is designated 'posttransfer' editing and involves deacylation of mischarged Ala-tRNA(Pro). The misacylated Cys-tRNA(Pro) is not edited by ProRS. In Corynebacterium glutamicum (strain R), this protein is Proline--tRNA ligase.